A 122-amino-acid polypeptide reads, in one-letter code: Large ribosomal subunit protein uL14 (122 aa).

Belongs to the universal ribosomal protein uL14 family. In terms of assembly, part of the 50S ribosomal subunit. Forms a cluster with proteins L3 and L19. In the 70S ribosome, L14 and L19 interact and together make contacts with the 16S rRNA in bridges B5 and B8.

In terms of biological role, binds to 23S rRNA. Forms part of two intersubunit bridges in the 70S ribosome. This is Large ribosomal subunit protein uL14 from Acinetobacter baumannii (strain AB307-0294).